Reading from the N-terminus, the 247-residue chain is Flavin-dependent thymidylate synthase (247 aa).

The 237-residue stretch at 1 to 237 (MRVRLLEATE…PHTFEYYDAE (237 aa)) folds into the ThyX domain. DUMP contacts are provided by residues 85–88 (QLTR), 98–100 (SMR), and Arg-176. 88-90 (RHR) contacts FAD. The short motif at 88 to 98 (RHRHASFDVQS) is the ThyX motif element. FAD contacts are provided by residues 192 to 194 (NPR) and His-198. Arg-203 is a binding site for dUMP. Arg-203 (involved in ionization of N3 of dUMP, leading to its activation) is an active-site residue.

It belongs to the thymidylate synthase ThyX family. Homotetramer. Requires FAD as cofactor.

It catalyses the reaction dUMP + (6R)-5,10-methylene-5,6,7,8-tetrahydrofolate + NADPH + H(+) = dTMP + (6S)-5,6,7,8-tetrahydrofolate + NADP(+). It participates in pyrimidine metabolism; dTTP biosynthesis. In terms of biological role, catalyzes the reductive methylation of 2'-deoxyuridine-5'-monophosphate (dUMP) to 2'-deoxythymidine-5'-monophosphate (dTMP) while utilizing 5,10-methylenetetrahydrofolate (mTHF) as the methyl donor, and NADPH and FADH(2) as the reductant. This chain is Flavin-dependent thymidylate synthase, found in Halobacterium salinarum (strain ATCC 700922 / JCM 11081 / NRC-1) (Halobacterium halobium).